We begin with the raw amino-acid sequence, 37 residues long: Large ribosomal subunit protein bL36c (37 aa).

Belongs to the bacterial ribosomal protein bL36 family.

Its subcellular location is the plastid. It is found in the chloroplast. This chain is Large ribosomal subunit protein bL36c, found in Tetradesmus obliquus (Green alga).